We begin with the raw amino-acid sequence, 245 residues long: 8-amino-3,8-dideoxy-manno-octulosonate cytidylyltransferase (245 aa).

This sequence belongs to the KdsB family.

The protein localises to the cytoplasm. The enzyme catalyses 8-amino-3,8-dideoxy-alpha-D-manno-octulosonate + CTP = CMP-8-amino-3,8-dideoxy-alpha-D-manno-oct-2-ulosonate + diphosphate. It functions in the pathway bacterial outer membrane biogenesis; lipopolysaccharide biosynthesis. In terms of biological role, activates KDO8N (a required 8-carbon sugar) for incorporation into bacterial lipopolysaccharide in the Shewanella genus. This is 8-amino-3,8-dideoxy-manno-octulosonate cytidylyltransferase from Shewanella halifaxensis (strain HAW-EB4).